The following is a 495-amino-acid chain: Telomere-binding protein subunit alpha (495 aa).

A compositionally biased stretch (polar residues) spans 1 to 13; the sequence is MSTAAKQNRSTSR. The interval 1–31 is disordered; that stretch reads MSTAAKQNRSTSRVSKKKTAAPKEGAAKKSD.

This sequence belongs to the telombin family. Heterodimer of an alpha and a beta subunit.

It localises to the nucleus. The protein resides in the chromosome. The protein localises to the telomere. Functionally, may function as protective capping of the single-stranded telomeric overhang. May also participate in telomere length regulation during DNA replication. Binds specifically to the T4G4-containing extension on the 3'strand and protects this region of the telomere from nuclease digestion and chemical modification. The polypeptide is Telomere-binding protein subunit alpha (MAC-56A) (Sterkiella nova (Ciliate)).